A 353-amino-acid chain; its full sequence is Melatonin receptor type 1A (353 aa).

Residues 1–15 are compositionally biased toward polar residues; it reads MKGNGSTLLNASQQA. Positions 1–23 are disordered; that stretch reads MKGNGSTLLNASQQAPGVGEGGG. Topologically, residues 1–32 are extracellular; that stretch reads MKGNGSTLLNASQQAPGVGEGGGPRPSWLAST. Residues Asn4 and Asn10 are each glycosylated (N-linked (GlcNAc...) asparagine). Residues 33 to 53 form a helical membrane-spanning segment; the sequence is LAFILIFTIVVDILGNLLVIL. Over 54–66 the chain is Cytoplasmic; it reads SVYRNKKLRNAGN. Residues 67-87 form a helical membrane-spanning segment; it reads IFVVSLAIADLVVAIYPYPLV. Topologically, residues 88-105 are extracellular; that stretch reads LTSIFNNGWNLGYLHCQI. Cys103 and Cys180 are joined by a disulfide. A helical membrane pass occupies residues 106 to 126; that stretch reads SAFLMGLSVIGSIFNITGIAI. The Cytoplasmic segment spans residues 127–147; sequence NRYCYICHSLKYDRLYSNKNS. Residues 148–168 traverse the membrane as a helical segment; it reads LCYVFLIWVLTLVAIMPNLQT. The Extracellular portion of the chain corresponds to 169 to 190; the sequence is GTLQYDPRIYSCTFTQSVSSAY. The chain crosses the membrane as a helical span at residues 191–211; sequence TIAVVVFHFIVPMIIVIFCYL. Residues 212-243 are Cytoplasmic-facing; that stretch reads RIWILVLQVRRRVKPDSKPRLKPQDFRNFVTM. A helical transmembrane segment spans residues 244–264; sequence FVVFVLFAICWAPLNFIGLIV. The Extracellular portion of the chain corresponds to 265–277; the sequence is ASDPATMAPRIPE. The helical transmembrane segment at 278-298 threads the bilayer; sequence WLFVASYYMAYFNSCLNAIIY. Residues 299 to 353 lie on the Cytoplasmic side of the membrane; it reads GLLNQNFRQEYKRILVSLFTAKMCFVDSSNDPADKIKCKPAPLIANNNLIKVDSV.

The protein belongs to the G-protein coupled receptor 1 family. As to expression, at least in the brain, more precisely in the pars tuberalis and the suprachiasmatic nucleus.

The protein resides in the cell membrane. In terms of biological role, high affinity receptor for melatonin. Likely to mediate the reproductive and circadian actions of melatonin. The activity of this receptor is mediated by pertussis toxin sensitive G proteins that inhibit adenylate cyclase activity. Possibly involved in sleep induction, by melatonin activation of the potassium channel KCNMA1/BK and the dissociation of G-beta and G-gamma subunits, thereby decreasing synaptic transmission. In Phodopus sungorus (Striped hairy-footed hamster), this protein is Melatonin receptor type 1A (MTNR1A).